A 229-amino-acid polypeptide reads, in one-letter code: Large ribosomal subunit protein uL1 (229 aa).

This sequence belongs to the universal ribosomal protein uL1 family. As to quaternary structure, part of the 50S ribosomal subunit.

Binds directly to 23S rRNA. The L1 stalk is quite mobile in the ribosome, and is involved in E site tRNA release. Its function is as follows. Protein L1 is also a translational repressor protein, it controls the translation of the L11 operon by binding to its mRNA. The sequence is that of Large ribosomal subunit protein uL1 from Flavobacterium johnsoniae (strain ATCC 17061 / DSM 2064 / JCM 8514 / BCRC 14874 / CCUG 350202 / NBRC 14942 / NCIMB 11054 / UW101) (Cytophaga johnsonae).